The sequence spans 422 residues: Putative polyketide beta-ketoacyl synthase 1 (422 aa).

The Ketosynthase family 3 (KS3) domain maps to 2–416 (TRRVAVTGIG…GFQSAVLLTG (415 aa)). Residues C169, H309, and H346 each act as for beta-ketoacyl synthase activity in the active site.

It belongs to the thiolase-like superfamily. Beta-ketoacyl-ACP synthases family.

The protein operates within antibiotic biosynthesis; curamycin biosynthesis. This Streptomyces cyaneus (Streptomyces curacoi) protein is Putative polyketide beta-ketoacyl synthase 1 (curA).